A 428-amino-acid chain; its full sequence is Sulfite exporter TauE/SafE family protein 6 (428 aa).

11 helical membrane passes run 1–21 (MKTL…NANQ), 61–81 (ALVV…ASGI), 82–102 (GDGF…LKAA), 105–125 (FSAF…HFGC), 128–148 (LIDY…VSVG), 149–169 (VICN…VFLM), 245–265 (YWIL…LALS), 294–314 (VMSF…GMII), 332–352 (TSFM…LLGM), 356–376 (EAAY…LVFA), and 388–408 (IIVF…ASFG).

Belongs to the 4-toluene sulfonate uptake permease (TSUP) (TC 2.A.102) family.

Its subcellular location is the membrane. This Arabidopsis thaliana (Mouse-ear cress) protein is Sulfite exporter TauE/SafE family protein 6.